Here is a 63-residue protein sequence, read N- to C-terminus: Small integral membrane protein 43 (63 aa).

2 important for interaction with SLC2A1 and SLC2A3 regions span residues 7-29 and 51-57; these read LLLY…FVVI and HREPWGF. A helical transmembrane segment spans residues 9–29; that stretch reads LYLALFFFLLFLLFLLLFVVI.

In terms of assembly, interacts with glucose transporters SLC2A1/GLUT1 and SLC2A3/GLUT3; the interactions may promote SLC2A1- and SLC2A3-mediated glucose transport to meet the energy needs of mesendoderm differentiation. As to expression, accumulates in the posterior primitive streak of mid-gastrulation embryos at 7.0 dpc. In the adult, highly abundant and enriched in the brain compared to other organs.

The protein localises to the cell membrane. In terms of biological role, required for mesendoderm differentiation. Interacts with glucose transporters and promotes glucose uptake. Probably augments the glucose uptake capacity of glucose transporter proteins to meet the energy needs of mesendoderm differentiation. The polypeptide is Small integral membrane protein 43 (Mus musculus (Mouse)).